Here is a 206-residue protein sequence, read N- to C-terminus: Small ribosomal subunit protein uS4 (206 aa).

The S4 RNA-binding domain occupies 96-156 (GRLDNVVYRM…EKAKKQSRVK (61 aa)).

It belongs to the universal ribosomal protein uS4 family. As to quaternary structure, part of the 30S ribosomal subunit. Contacts protein S5. The interaction surface between S4 and S5 is involved in control of translational fidelity.

In terms of biological role, one of the primary rRNA binding proteins, it binds directly to 16S rRNA where it nucleates assembly of the body of the 30S subunit. With S5 and S12 plays an important role in translational accuracy. The chain is Small ribosomal subunit protein uS4 from Salmonella typhi.